Consider the following 263-residue polypeptide: Ribosomal RNA small subunit methyltransferase A (263 aa).

S-adenosyl-L-methionine is bound by residues asparagine 13, threonine 15, glycine 40, glutamate 61, aspartate 85, and asparagine 105.

This sequence belongs to the class I-like SAM-binding methyltransferase superfamily. rRNA adenine N(6)-methyltransferase family. RsmA subfamily.

It localises to the cytoplasm. The enzyme catalyses adenosine(1518)/adenosine(1519) in 16S rRNA + 4 S-adenosyl-L-methionine = N(6)-dimethyladenosine(1518)/N(6)-dimethyladenosine(1519) in 16S rRNA + 4 S-adenosyl-L-homocysteine + 4 H(+). In terms of biological role, specifically dimethylates two adjacent adenosines (A1518 and A1519) in the loop of a conserved hairpin near the 3'-end of 16S rRNA in the 30S particle. May play a critical role in biogenesis of 30S subunits. The polypeptide is Ribosomal RNA small subunit methyltransferase A (Mycoplasma pneumoniae (strain ATCC 29342 / M129 / Subtype 1) (Mycoplasmoides pneumoniae)).